Here is a 349-residue protein sequence, read N- to C-terminus: 4-hydroxythreonine-4-phosphate dehydrogenase (349 aa).

Residue T136 participates in substrate binding. Residues H171, H216, and H281 each contribute to the a divalent metal cation site. Residues K289, N298, and R307 each contribute to the substrate site.

This sequence belongs to the PdxA family. In terms of assembly, homodimer. Requires a divalent metal cation as cofactor.

The protein localises to the cytoplasm. The enzyme catalyses 4-(phosphooxy)-L-threonine + NAD(+) = 3-amino-2-oxopropyl phosphate + CO2 + NADH. It participates in cofactor biosynthesis; pyridoxine 5'-phosphate biosynthesis; pyridoxine 5'-phosphate from D-erythrose 4-phosphate: step 4/5. Catalyzes the NAD(P)-dependent oxidation of 4-(phosphooxy)-L-threonine (HTP) into 2-amino-3-oxo-4-(phosphooxy)butyric acid which spontaneously decarboxylates to form 3-amino-2-oxopropyl phosphate (AHAP). The chain is 4-hydroxythreonine-4-phosphate dehydrogenase from Synechocystis sp. (strain ATCC 27184 / PCC 6803 / Kazusa).